Reading from the N-terminus, the 114-residue chain is Phosphoribosyl-AMP cyclohydrolase (114 aa).

Position 76 (Asp-76) interacts with Mg(2+). Cys-77 lines the Zn(2+) pocket. Mg(2+) is bound by residues Asp-78 and Asp-80. Zn(2+) contacts are provided by Cys-93 and Cys-100.

Belongs to the PRA-CH family. Homodimer. Mg(2+) is required as a cofactor. It depends on Zn(2+) as a cofactor.

It is found in the cytoplasm. The enzyme catalyses 1-(5-phospho-beta-D-ribosyl)-5'-AMP + H2O = 1-(5-phospho-beta-D-ribosyl)-5-[(5-phospho-beta-D-ribosylamino)methylideneamino]imidazole-4-carboxamide. The protein operates within amino-acid biosynthesis; L-histidine biosynthesis; L-histidine from 5-phospho-alpha-D-ribose 1-diphosphate: step 3/9. Functionally, catalyzes the hydrolysis of the adenine ring of phosphoribosyl-AMP. This chain is Phosphoribosyl-AMP cyclohydrolase, found in Streptococcus gordonii (strain Challis / ATCC 35105 / BCRC 15272 / CH1 / DL1 / V288).